A 194-amino-acid polypeptide reads, in one-letter code: FMN-dependent NADH:quinone oxidoreductase 1 (194 aa).

FMN contacts are provided by residues Ser9 and 85–88 (MYNF).

This sequence belongs to the azoreductase type 1 family. As to quaternary structure, homodimer. FMN serves as cofactor.

It catalyses the reaction 2 a quinone + NADH + H(+) = 2 a 1,4-benzosemiquinone + NAD(+). The enzyme catalyses N,N-dimethyl-1,4-phenylenediamine + anthranilate + 2 NAD(+) = 2-(4-dimethylaminophenyl)diazenylbenzoate + 2 NADH + 2 H(+). In terms of biological role, quinone reductase that provides resistance to thiol-specific stress caused by electrophilic quinones. Its function is as follows. Also exhibits azoreductase activity. Catalyzes the reductive cleavage of the azo bond in aromatic azo compounds to the corresponding amines. The sequence is that of FMN-dependent NADH:quinone oxidoreductase 1 from Xanthomonas euvesicatoria pv. vesicatoria (strain 85-10) (Xanthomonas campestris pv. vesicatoria).